Here is a 784-residue protein sequence, read N- to C-terminus: MKKRIPTLLATMIATALYSQQGLAADLASQCMLGVPSYDRPLVQGDTNDLPVTINADHAKGDYPDDAVFTGSVDIMQGNSRLQADEVQLHQKEAPGQPEPVRTVDALGNVHYDDNQVILKGPKGWANLNTKDTNVWEGDYQMVGRQGRGKADLMKQRGENRYTILDNGSFTSCLPGSDTWSVVGSEIIHDREEQVAEIWNARFKVGPVPIFYSPYLQLPVGDKRRSGFLIPNAKYTTTNYFEFYLPYYWNIAPNMDATITPHYMHRRGNIMWENEFRYLSQAGAGLMELDYLPSDKVYEDEHPNDDSSRRWLFYWNHSGVMDQVWRFNVDYTKVSDPSYFNDFDNKYGSSTDGYATQKFSVGYAVQNFNATVSTKQFQVFSEQNTSSYSAEPQLDVNYYQNDVGPFDTRIYGQAVHFVNTRDDMPEATRVHLEPTINLPLSNNWGSINTEAKLLATHYQQTNLDWYNSRNTTKLDESVNRVMPQFKVDGKMVFERDMEMLAPGYTQTLEPRAQYLYVPYRDQSDIYNYDSSLLQSDYSGLFRDRTYGGLDRIASANQVTTGVTSRIYDDAAVERFNISVGQIYYFTESRTGDDNITWENDDKTGSLVWAGDTYWRISERWGLRGGIQYDTRLDNVATSNSSIEYRRDEDRLVQLNYRYASPEYIQATLPKYYSTAEQYKNGISQVGAVASWPIADRWSIVGAYYYDTNANKQADSMLGVQYSSCCYAIRVGYERKLNGWDNDKQHAVYDNAIGFNIELRGLSSNYGLGTQEMLRSNILPYQNTL.

The first 24 residues, 1 to 24, serve as a signal peptide directing secretion; the sequence is MKKRIPTLLATMIATALYSQQGLA. Intrachain disulfides connect Cys-31–Cys-724 and Cys-173–Cys-725.

Belongs to the LptD family. In terms of assembly, component of the lipopolysaccharide transport and assembly complex. Interacts with LptE and LptA. May interact with LptE during assembly of LptD by the beta-barrel assembly machine (BAM). Also interacts with LptM, which promotes the efficient assembly of the LptDE translocon by the BAM complex. Contains two intramolecular disulfide bonds. At least one disulfide bond is required for activity, and protein is probably fully oxidized in vivo.

The protein resides in the cell outer membrane. Together with LptE, is involved in the assembly of lipopolysaccharide (LPS) at the surface of the outer membrane. Contributes to n-hexane resistance. The protein is LPS-assembly protein LptD of Escherichia coli (strain K12).